Reading from the N-terminus, the 272-residue chain is MAEHRFEDFNGLVMYRKNYKEKDMLVKILTDRFGKKMFYLRGANKPKFRLSAAILPFTQAEYGGDIRDDGLSFLNNVKSATQFQTISQDLFLNAYATYILNLIDVGFPDSEPLGIWYDKVEQALNLIDEGFDAAMITHIIEIQLLQVFGVQPQLQGCAVCGRTDLAFDYSESYGGLLCQRHWHLDPNRFHSSQRAIYYLRLFSVIDLFKIQSVNVKEATQVELKMIIDRLYQDTVGLSLKSKQFIDKMYSFDSQLPQLKKVPSEIDSTPKDD.

It belongs to the RecO family.

Involved in DNA repair and RecF pathway recombination. This is DNA repair protein RecO from Latilactobacillus sakei subsp. sakei (strain 23K) (Lactobacillus sakei subsp. sakei).